Reading from the N-terminus, the 505-residue chain is Activin receptor type-1B (505 aa).

A signal peptide spans 1–23 (MAESAGASSFFPLVVLLLAGSGG). Over 24-126 (SGPRGIQALL…AHPSMWGPVE (103 aa)) the chain is Extracellular. N43 carries N-linked (GlcNAc...) asparagine glycosylation. Residues 127 to 149 (LVGIIAGPVFLLFLIIIIVFLVI) traverse the membrane as a helical segment. At 150–505 (NYHQRVYHNR…QLSVQEDVKI (356 aa)) the chain is on the cytoplasmic side. The region spanning 177–206 (KTLQDLVYDLSTSGSGSGLPLFVQRTVART) is the GS domain. Residues 207–497 (IVLQEIIGKG…LRIKKTLSQL (291 aa)) form the Protein kinase domain. ATP-binding positions include 213 to 221 (IGKGRFGEV) and K234. D335 functions as the Proton acceptor in the catalytic mechanism. Residue Y380 is modified to Phosphotyrosine.

Belongs to the protein kinase superfamily. TKL Ser/Thr protein kinase family. TGFB receptor subfamily. In terms of assembly, forms an activin receptor complex with activin receptor type-2 (ACVR2A or ACVR2B). Part of a complex consisting of MAGI2/ARIP1, ACVR2A, ACVR1B and SMAD3. Interacts with SMAD2 and SMAD3. Interacts with SMAD7. Interacts with FKBP1A. Interacts with IGSF1. Interacts with CRIPTO. Interacts with TDP2. Interacts with TSC22D1/TSC-22. In terms of processing, autophosphorylated. Phosphorylated by activin receptor type-2 (ACVR2A or ACVR2B) in response to activin-binding at serine and threonine residues in the GS domain. Phosphorylation of ACVR1B by activin receptor type-2 regulates association with SMAD7. Post-translationally, ubiquitinated. Level of ubiquitination is regulated by the SMAD7-SMURF1 complex. Ubiquitinated.

Its subcellular location is the cell membrane. It carries out the reaction L-threonyl-[receptor-protein] + ATP = O-phospho-L-threonyl-[receptor-protein] + ADP + H(+). It catalyses the reaction L-seryl-[receptor-protein] + ATP = O-phospho-L-seryl-[receptor-protein] + ADP + H(+). Activin receptor type-2 (ACVR2A or ACVR2B) activates the type-1 receptor through phosphorylation of its regulatory GS domain. In terms of biological role, transmembrane serine/threonine kinase activin type-1 receptor forming an activin receptor complex with activin receptor type-2 (ACVR2A or ACVR2B). Transduces the activin signal from the cell surface to the cytoplasm and is thus regulating a many physiological and pathological processes including neuronal differentiation and neuronal survival, hair follicle development and cycling, FSH production by the pituitary gland, wound healing, extracellular matrix production, immunosuppression and carcinogenesis. Activin is also thought to have a paracrine or autocrine role in follicular development in the ovary. Within the receptor complex, type-2 receptors (ACVR2A and/or ACVR2B) act as a primary activin receptors whereas the type-1 receptors like ACVR1B act as downstream transducers of activin signals. Activin binds to type-2 receptor at the plasma membrane and activates its serine-threonine kinase. The activated receptor type-2 then phosphorylates and activates the type-1 receptor such as ACVR1B. Once activated, the type-1 receptor binds and phosphorylates the SMAD proteins SMAD2 and SMAD3, on serine residues of the C-terminal tail. Soon after their association with the activin receptor and subsequent phosphorylation, SMAD2 and SMAD3 are released into the cytoplasm where they interact with the common partner SMAD4. This SMAD complex translocates into the nucleus where it mediates activin-induced transcription. Inhibitory SMAD7, which is recruited to ACVR1B through FKBP1A, can prevent the association of SMAD2 and SMAD3 with the activin receptor complex, thereby blocking the activin signal. Activin signal transduction is also antagonized by the binding to the receptor of inhibin-B via the IGSF1 inhibin coreceptor. ACVR1B also phosphorylates TDP2. The sequence is that of Activin receptor type-1B (Acvr1b) from Mus musculus (Mouse).